The primary structure comprises 444 residues: Tubulin beta-2 chain (444 aa).

Positions 11, 69, 138, 142, 143, 144, 204, and 226 each coordinate GTP. Glu-69 serves as a coordination point for Mg(2+).

It belongs to the tubulin family. In terms of assembly, dimer of alpha and beta chains. A typical microtubule is a hollow water-filled tube with an outer diameter of 25 nm and an inner diameter of 15 nM. Alpha-beta heterodimers associate head-to-tail to form protofilaments running lengthwise along the microtubule wall with the beta-tubulin subunit facing the microtubule plus end conferring a structural polarity. Microtubules usually have 13 protofilaments but different protofilament numbers can be found in some organisms and specialized cells. Mg(2+) is required as a cofactor.

The protein resides in the cytoplasm. It is found in the cytoskeleton. Tubulin is the major constituent of microtubules, a cylinder consisting of laterally associated linear protofilaments composed of alpha- and beta-tubulin heterodimers. Microtubules grow by the addition of GTP-tubulin dimers to the microtubule end, where a stabilizing cap forms. Below the cap, tubulin dimers are in GDP-bound state, owing to GTPase activity of alpha-tubulin. This Zea mays (Maize) protein is Tubulin beta-2 chain (TUBB2).